A 338-amino-acid chain; its full sequence is MSLPALQNSAVFYRRIINRFPQDFSLAFAYGSAVFRQTGSSQGHMVKNMLDFVFAVDDPVTWHTMNLIENRKHYSFLRFLGPKQISSIQSDYGAGVYFNTLVPAEDRLIKYGVISTDALIDDLLHWKTLYVAGRLHKPVRILLQSENGNLRSALLGNLKSAVIASFLMLPESFSEEELYLQIAGLSYSGDFRMVFGEDKSKVSNIVKDNMQHFRQLYNRILQECPQVVYKPQQGRLEVDKSPEGQFTQLMALPRTLQQQITRLVDRPGKNRDVEEILLQVAQDPDCGSVVQQGISSIVKSSSITQSAKGIATAGLVKTVSYSTKKLQKMWRGWRRKPA.

The protein belongs to the TAM41 family. Mg(2+) serves as cofactor.

It localises to the mitochondrion inner membrane. The enzyme catalyses a 1,2-diacyl-sn-glycero-3-phosphate + CTP + H(+) = a CDP-1,2-diacyl-sn-glycerol + diphosphate. It participates in phospholipid metabolism; CDP-diacylglycerol biosynthesis; CDP-diacylglycerol from sn-glycerol 3-phosphate: step 3/3. In terms of biological role, catalyzes the conversion of phosphatidic acid (PA) to CDP-diacylglycerol (CDP-DAG), an essential intermediate in the synthesis of phosphatidylglycerol, cardiolipin and phosphatidylinositol. This is Phosphatidate cytidylyltransferase, mitochondrial (tamm41) from Danio rerio (Zebrafish).